Reading from the N-terminus, the 410-residue chain is MAASNQSEVNIGMVGHVDHGKTSLTRKLTGVWTDTHSEELKRGISIRLGYADCEIKKCETCDEPECYTVGKKCDSCGGKLQTLRKISFVDAPGHETLMATMLSGASLMDGAILVIAASEECPQPQTKEHLMALDALGVEKIIIVQNKIDLVSEEAAVENYNQIKEFTKGTVAENAPIIPVSAHHGANLDVLLKAIQDFIPTPERDETVSPKLYVARSFDVNKPGSEIKDLKGGVIGGSIIQGALKVGDELEIKPGIKVTEGNKTHWVPIITKIISLGVGSKKLKTAYPGGLIGVGTELDPNLTKSDALSGSLAGIPGTLPETLEKMEIEPQLLERVVGSQDELVIEPLKTNEVLMLNVGTSTTVGVTVSARPDRAEIKLKLPVCADKGDRVAISRKIGSRWRLIGYGIIL.

One can recognise a tr-type G domain in the interval 6 to 203 (QSEVNIGMVG…AIQDFIPTPE (198 aa)). Residues 15–22 (GHVDHGKT) are G1. D18, T22, G43, and S45 together coordinate Mg(2+). 18 to 23 (DHGKTS) provides a ligand contact to GTP. The G2 stretch occupies residues 43-47 (GISIR). Positions 58, 61, 73, and 76 each coordinate Zn(2+). A G3 region spans residues 90-93 (DAPG). Residues 146–149 (NKID) and 181–183 (SAH) each bind GTP. The segment at 146–149 (NKID) is G4. The interval 181 to 183 (SAH) is G5.

This sequence belongs to the TRAFAC class translation factor GTPase superfamily. Classic translation factor GTPase family. EIF2G subfamily. Heterotrimer composed of an alpha, a beta and a gamma chain. Mg(2+) serves as cofactor.

The catalysed reaction is GTP + H2O = GDP + phosphate + H(+). EIF-2 functions in the early steps of protein synthesis by forming a ternary complex with GTP and initiator tRNA. The chain is Translation initiation factor 2 subunit gamma from Methanococcus maripaludis (strain DSM 14266 / JCM 13030 / NBRC 101832 / S2 / LL).